We begin with the raw amino-acid sequence, 131 residues long: Large-conductance mechanosensitive channel (131 aa).

A run of 3 helical transmembrane segments spans residues 8–28, 30–50, and 67–87; these read FAIR…GAFG, IVSS…LGGI, and GAFI…FLFV.

The protein belongs to the MscL family. Homopentamer.

It localises to the cell membrane. Its function is as follows. Channel that opens in response to stretch forces in the membrane lipid bilayer. May participate in the regulation of osmotic pressure changes within the cell. The chain is Large-conductance mechanosensitive channel from Geobacillus thermodenitrificans (strain NG80-2).